We begin with the raw amino-acid sequence, 818 residues long: Sodium/hydrogen exchanger 1 (818 aa).

The Extracellular segment spans residues 1 to 98 (MLLWPGASGL…FPVLGIDYQH (98 aa)). Residues 44–76 (STIRGSEPPRERSIGDVTTAPPELAPESRPVNH) form a disordered region. Residue asparagine 75 is glycosylated (N-linked (GlcNAc...) asparagine). The helical transmembrane segment at 99–121 (VRIPFEIALWILLACLMKIGFHV) threads the bilayer. Residues 122–130 (IPTISSIVP) lie on the Cytoplasmic side of the membrane. A helical transmembrane segment spans residues 131–148 (ESCLLIVVGLLVGGLIKG). Topologically, residues 149 to 158 (VGETPPILQS) are extracellular. The chain crosses the membrane as a helical span at residues 159 to 176 (EVFFLFLLPPIILDAGYF). Topologically, residues 177–186 (LPLRQFTENL) are cytoplasmic. The chain crosses the membrane as a helical span at residues 187–215 (GTILIFAVVGTLWNAFFLGGLMYAVCLVG). The Extracellular segment spans residues 216-222 (GEQINNI). The helical transmembrane segment at 223 to 249 (GLLENLLFGSIISAVDPVAVLAVFEEI) threads the bilayer. The Cytoplasmic segment spans residues 250-252 (HIN). Residues 253-283 (ELLHILVFGESLLNDAVTVVLYHLFEEFANY) form a helical membrane-spanning segment. Topologically, residues 284 to 287 (DRVG) are extracellular. Residues 288–322 (IVDIILGFLSFFVVSLGGVFVGVVYGVIAAFTSRF) form a helical membrane-spanning segment. The Cytoplasmic portion of the chain corresponds to 323–328 (TSHIRV). Residues 329 to 341 (IEPLFVFLYSYMA) form a helical membrane-spanning segment. Residues 342 to 350 (YLSAELFHL) are Extracellular-facing. The helical transmembrane segment at 351 to 371 (SGIMALIASGVVMRPYVEANI) threads the bilayer. Residues 372–373 (SH) are Cytoplasmic-facing. A helical membrane pass occupies residues 374–404 (KSHTTIKYFLKMWSSVSETLIFIFLGVSTVA). At 405 to 410 (GSHHWN) the chain is on the extracellular side. Residues 411–438 (WTFVISTLLFCLIARVLGVLGLTWFINK) traverse the membrane as a helical segment. The Cytoplasmic segment spans residues 439 to 444 (FRIVKL). The helical transmembrane segment at 445–469 (TPKDQFIIAYGGLRGAIAFSLGYLL) threads the bilayer. Over 470-475 (DKKHFP) the chain is Extracellular. The chain crosses the membrane as a helical span at residues 476-505 (MCDLFLTAIITVIFFTVFVQGMTIRPLVDL). The interaction with TESC stretch occupies residues 503-545 (VDLLAVKKKQETKRSINEEIHTQFLDHLLTGIEDICGHYGHHH). The Cytoplasmic segment spans residues 506–818 (LAVKKKQETK…EGEPFIPKGQ (313 aa)). Residues 509 to 516 (KKKQETKR) form a PI(4,5)P2-binding region region. Positions 515–545 (KRSINEEIHTQFLDHLLTGIEDICGHYGHHH) are interaction with CHP2. The tract at residues 540-545 (HYGHHH) is confers pH-dependent PI(4,5)P2 binding. Residues 552–560 (RFNKKYVKK) form a PI(4,5)P2-binding region region. Phosphoserine is present on residues serine 599 and serine 602. Phosphothreonine is present on threonine 603. Serine 605 and serine 648 each carry phosphoserine. Residues 633–818 (KILRNNLQKT…EGEPFIPKGQ (186 aa)) are interaction with TESC. The tract at residues 633–818 (KILRNNLQKT…EGEPFIPKGQ (186 aa)) is interaction with CALM1. Residues 684–687 (LTVP) are interaction with PPP3CA. A phosphoserine mark is found at serine 693, serine 697, and serine 703. The interaction with PPP3CA stretch occupies residues 715–720 (PVITID). A phosphoserine mark is found at serine 723, serine 726, and serine 729. The tract at residues 741 to 818 (VLGLSRDPGR…EGEPFIPKGQ (78 aa)) is disordered. At threonine 782 the chain carries Phosphothreonine. Residues 785 to 794 (PSDSPSSQRI) are compositionally biased toward polar residues. A phosphoserine mark is found at serine 788, serine 790, and serine 799.

Belongs to the monovalent cation:proton antiporter 1 (CPA1) transporter (TC 2.A.36) family. As to quaternary structure, homodimer; dimerization is crucial for its function. Oligomer. Interacts with CALM in a calcium-dependent manner. Interacts with TESC. Interacts (via the juxtamembrane region of the cytoplasmic C-terminal domain) with CHP1; the interaction occurs at the plasma membrane in a calcium-dependent manner. Interacts with CHP2; the interaction occurs in a calcium-dependent manner. Interacts with EZR; regulates the cytoskeletal interactions of SLC9A1 and promotes stress fiber formation. Ubiquitinated, leading to its degradation by the proteasome. Ubiquitination is reduced by CHP1. In terms of processing, O-glycosylated. Post-translationally, palmitoylated; may play a major role in SLC9A1 regulation. Phosphorylation at Thr-782 increases SLC9A1 activity. Specifically dephosphorylated at Thr-782 by PPP3CA that negatively regulates SLC9A1 activity. Phosphorylation at Ser-648 by AKT1 reduces SLC9A1 binding to CALM1.

It localises to the cell membrane. The protein localises to the basolateral cell membrane. The catalysed reaction is Na(+)(in) + H(+)(out) = Na(+)(out) + H(+)(in). It carries out the reaction Li(+)(out) + H(+)(in) = Li(+)(in) + H(+)(out). It catalyses the reaction Li(+)(in) + Na(+)(out) = Li(+)(out) + Na(+)(in). With respect to regulation, activated at acidic pHs. Inhibited by amiloride and 5-amino-substituted derivatives. Inhibited by cariporide and eniporide. Phosphatidylinositol 4,5-bisphosphate (PI(4,5)P2) and phosphatidylinositol 3,4,5-trisphosphate (PI(3,4,5)P3) bind and differentially regulate SLC9A1 activity. Electroneutral Na(+) /H(+) antiporter that extrudes Na(+) in exchange for external protons driven by the inward sodium ion chemical gradient, protecting cells from acidification that occurs from metabolism. Exchanges intracellular H(+) ions for extracellular Na(+) in 1:1 stoichiometry. Plays a key role in maintening intracellular pH neutral and cell volume, and thus is important for cell growth, proliferation, migration and survival. In addition, can transport lithium Li(+) and also functions as a Na(+)/Li(+) antiporter. SLC9A1 also functions in membrane anchoring and organization of scaffolding complexes that coordinate signaling inputs. This is Sodium/hydrogen exchanger 1 (SLC9A1) from Bos taurus (Bovine).